Here is a 979-residue protein sequence, read N- to C-terminus: MSPLKIYGPIRIRSMQTGITKWKEGSFEIVEKDNRVSLLVHYNTGGIPRVFQLSHNIKNVVLRPSGIKQSRLMLTLQDNSFLSIDKVPSKDAEEMRLFLDAVHQNRLHAAMKASQGSGSFGTILGSRTSQKETNRQLSYSDNQASSKRGSLETKDEIPFRKVLGSPGRGPIKTVTGGGMAVTRTIPSLTLTSTPLRSGLLENRTEKRKRMLSGSELTEDYPKENDSSSNNKAMTDPSRKYLTSCREKQLSLKQAEENRTSGLLPLQSSSFYGSRAGSKDYSSGVTNLDRCNVSSQTPSAKRSLGFLPQPTPLSVKKLRCNQDYAGWNRPRVPLSSHQQQLQGFSNLGNTCYMNAILQSLFSLQSFANDLLKQSIPWKKIPFNALIRRFANLLIKKDICNSETKKELLKKVKNAISATAERFSGYVQNDAHEFLSQCLDQLKEDMEKLNKTWKTEPVLGEENLPDTSATKVFTCPVITNLEFEVQHSIICKACGETIPKREQFNDLSIDLPRRKKPLPPRSIQDSLDLFFRAEELEYSCEKCGGKCALVRHKFNRLPRVLILHLKRYSFNVALSLNNKLGQQVIIPRFLTLASHCTESTKPPVTLGWSAPVAISRPLRACQMMNSCITSPSAPSKKFTFKSKSSVTSCLDSDSEDELKRSVVLSQRLCDLPGNEQYQEDVEKDLKLCRLEPGKAELENSGFDRMSEEEVLAAVLEISRREASPVLSPEDDDKPTSSPDTGFAEDDIPEMPENPDAMEIEKSKTITEPGPASFTEITKDCDENKENKTPEGSQGEVDWLQQYDVDREREEQELQQALAQSLQEQEAWEQKEDDDLKRATELSLQEFNNSFLDSLGSDEDSGNEDVFDMEYTEAEAEELKRNAETGALPHSYRLISVVSHIGSTSSSGHYISDVYDIKKQAWFTYNDLEVSKIQEAAVQSDRDRSGYIFFYMHKEIFDELLETEKTSQALSMEVGRAARQAS.

The KEN box 1 signature appears at K32–N34. 2 short sequence motifs (D-box) span residues R71–N79 and R96–N105. S114 carries the post-translational modification Phosphoserine. 2 disordered regions span residues G116 to G178 and S192 to Y240. Polar residues predominate over residues R135–R148. Residues G149 to F159 are compositionally biased toward basic and acidic residues. Positions R160–R168 match the D-box 3 motif. At S212 the chain carries Phosphoserine. Positions K222 to N224 match the KEN box 2 motif. Residues Q341 to K951 enclose the USP domain. C350 serves as the catalytic Nucleophile. Residue S628 is modified to Phosphoserine; by CDK2. Phosphoserine is present on residues S650 and S652. The UIM 1 domain maps to S704–V723. Positions E719 to D795 are disordered. Position 770 is a phosphoserine (S770). The span at I774–T786 shows a compositional bias: basic and acidic residues. Residues K782 to N784 carry the KEN box 3 motif. UIM domains are found at residues R806–W825 and K828–S847. H906 serves as the catalytic Proton acceptor.

It belongs to the peptidase C19 family. Interacts with FZR1/CDH1. Interacts with CDT1. In terms of processing, polyubiquitinated via 'Lys-11'-linked ubiquitin by the APC(CDH1) complex during late mitosis, leading to its degradation. Able to mediate auto-deubiquitination. Phosphorylated at Ser-628 by CDK2 during G1/S phase but not during mitosis; phosphorylation at Ser-628 is required for deubiquitinase activity. Also polyubiquitinated during early G1 phase, without leading to degradation. Phosphorylated at Ser-114 by ATM following DNA damage, which in turn increases its deubiquitination activity towards BLM.

It localises to the nucleus. The protein localises to the chromosome. It catalyses the reaction Thiol-dependent hydrolysis of ester, thioester, amide, peptide and isopeptide bonds formed by the C-terminal Gly of ubiquitin (a 76-residue protein attached to proteins as an intracellular targeting signal).. Functionally, deubiquitinase that plays a role in different processes including cell cycle regulation, DNA replication or DNA damage response. Antagonizes the anaphase-promoting complex (APC/C) during G1/S transition by mediating deubiquitination of cyclin-A (CCNA1 and CCNA2), thereby promoting S phase entry. Specifically mediates deubiquitination of 'Lys-11'-linked polyubiquitin chains, a specific ubiquitin-linkage type mediated by the APC/C complex. Phosphorylation at Ser-628 during G1/S phase maximizes the deubiquitinase activity, leading to prevent degradation of cyclin-A (CCNA1 and CCNA2). Plays an important role in the regulation of DNA replication by stabilizing the licensing factor CDT1. Also plays an essential role beyond S-phase entry to promote the efficiency and fidelity of replication by deubiquitinating checkpoint kinase 1/CHK1, promoting its stability. Sustains the DNA damage response (DDR) by deubiquitinating and stabilizing the ATP-dependent DNA helicase BLM. Mechanistically, DNA double-strand breaks (DSB) promotes ATM-mediated phosphorylation of USP37 and enhances the binding between USP37 and BLM. Promotes cell migration by deubiquitinating and stabilizing the epithelial-mesenchymal transition (EMT)-inducing transcription factor SNAI. Plays a role in the regulation of mitotic spindle assembly and mitotic progression by associating with chromatin-associated WAPL and stabilizing it through deubiquitination. The sequence is that of Ubiquitin carboxyl-terminal hydrolase 37 from Mus musculus (Mouse).